The sequence spans 640 residues: Protein cereblon (640 aa).

The span at 1-11 (MDDEETAEIDE) shows a compositional bias: acidic residues. 2 disordered regions span residues 1-25 (MDDE…ELGP) and 92-159 (REDP…EAVP). Low complexity predominate over residues 113 to 137 (QPAQQEEQASLPYDSPSRASISSRH). The 229-residue stretch at 278-506 (RMLIFMHQHI…IIDTTLKQES (229 aa)) folds into the Lon N-terminal domain. The CULT domain maps to 505-614 (ESLFYCRYCN…LAGSSVRIGK (110 aa)). C510, C513, C579, and C582 together coordinate Zn(2+).

It belongs to the CRBN family. As to quaternary structure, likely a component of a DCX (DDB1-CUL4-X-box) protein ligase complex. May interact with pic/DDB1. Post-translationally, ubiquitinated.

The protein resides in the nucleus. Its pathway is protein modification; protein ubiquitination. Functionally, substrate recognition component of a DCX (DDB1-CUL4-X-box) E3 protein ligase complex that mediates the ubiquitination and subsequent proteasomal degradation of target proteins. Has an essential role in mediating growth by negatively regulating insulin signaling. It also has a role in maintaining presynaptic function in the neuromuscular junction synapses of third-instar larvae. This is Protein cereblon from Drosophila virilis (Fruit fly).